Consider the following 319-residue polypeptide: ADP-ribosyl cyclase/cyclic ADP-ribose hydrolase 2 (319 aa).

The first 33 residues, 1-33 (MAVQACALSLRLGLWMSLLLPVLPGAGARAAGA), serve as a signal peptide directing secretion. 3 cysteine pairs are disulfide-bonded: cysteine 52-cysteine 68, cysteine 84-cysteine 164, and cysteine 145-cysteine 158. N-linked (GlcNAc...) asparagine glycosylation is found at asparagine 67 and asparagine 96. An NAD(+)-binding site is contributed by tryptophan 110. Tryptophan 110 serves as a coordination point for nicotinamide. Residue asparagine 149 is glycosylated (N-linked (GlcNAc...) asparagine). NAD(+) is bound at residue tryptophan 173. N-linked (GlcNAc...) asparagine glycosylation occurs at asparagine 193. Position 211 (glutamate 211) interacts with NAD(+). Intrachain disulfides connect cysteine 239-cysteine 260 and cysteine 272-cysteine 281. Serine 294 carries GPI-anchor amidated serine lipidation. A propeptide spanning residues 295–319 (PALHAIGDISLIISLLVALASSSQA) is cleaved from the precursor.

Belongs to the ADP-ribosyl cyclase family. In terms of assembly, homodimer. In terms of tissue distribution, pancreatic islets, kidney, spleen, heart, thymus, intestine and salivary gland.

The protein localises to the cell membrane. It catalyses the reaction NAD(+) + H2O = ADP-D-ribose + nicotinamide + H(+). It carries out the reaction NAD(+) = cyclic ADP-beta-D-ribose + nicotinamide + H(+). The catalysed reaction is cyclic ADP-beta-D-ribose + H2O = ADP-D-ribose. In terms of biological role, catalyzes both the synthesis of cyclic ADP-beta-D-ribose (cADPR) from NAD(+), and its hydrolysis to ADP-D-ribose (ADPR). Cyclic ADPR is known to serve as an endogenous second messenger that elicits calcium release from intracellular stores, and thus regulates the mobilization of intracellular calcium. May be involved in pre-B-cell growth. The protein is ADP-ribosyl cyclase/cyclic ADP-ribose hydrolase 2 (Bst1) of Rattus norvegicus (Rat).